Reading from the N-terminus, the 953-residue chain is Nonsense-mediated mRNA decay factor SMG8 (953 aa).

Disordered stretches follow at residues Ala571–Pro604 and Pro629–Thr653. The span at Asp573–Pro586 shows a compositional bias: acidic residues. The segment covering Ile595–Pro604 has biased composition (polar residues). The segment covering Ser634–Thr653 has biased composition (low complexity).

It belongs to the SMG8 family.

Involved in nonsense-mediated decay (NMD) of mRNAs containing premature stop codons. Probable component of kinase complex containing nonC and recruited to stalled ribosomes. The polypeptide is Nonsense-mediated mRNA decay factor SMG8 (Drosophila pseudoobscura pseudoobscura (Fruit fly)).